A 235-amino-acid polypeptide reads, in one-letter code: Probable tetraspanin tspB (235 aa).

At 1–23 the chain is on the cytoplasmic side; the sequence is MVDTTNLIPNTPRYLKVPLIAFN. A helical transmembrane segment spans residues 24 to 44; sequence TILWVLGLVLVIIGSIGVSFF. Over 45 to 68 the chain is Extracellular; that stretch reads SNFKDFTKVSKASAALSNLTTGAP. N-linked (GlcNAc...) asparagine glycosylation is present at N62. A helical membrane pass occupies residues 69–89; sequence AGVLVIGIFFVILTVIGCFVA. The Cytoplasmic segment spans residues 90-93; sequence GKEK. Residues 94–114 traverse the membrane as a helical segment; the sequence is LVGLVIYTMLMLIILVALIGV. The Extracellular segment spans residues 115 to 200; that stretch reads GGKALTLHND…ISSNLYLVGA (86 aa). 2 N-linked (GlcNAc...) asparagine glycosylation sites follow: N143 and N159. Residues 201 to 221 traverse the membrane as a helical segment; the sequence is AAVSIGVIEFICMLFALFLII. The Cytoplasmic portion of the chain corresponds to 222–235; sequence RICRAPRTKSYDYQ.

Belongs to the tetraspanin (TM4SF) family.

It localises to the membrane. This chain is Probable tetraspanin tspB (tspB), found in Dictyostelium discoideum (Social amoeba).